The sequence spans 214 residues: UPF0690 protein C1orf52 homolog (214 aa).

Disordered stretches follow at residues 1-66 (MSDE…SVSK) and 81-214 (DSRA…QCLD). Positions 32 to 44 (PEATASSAPAEPQ) are enriched in low complexity. Composition is skewed to basic and acidic residues over residues 49–61 (RAAEPLPRPDELF) and 81–97 (DSRAVRAPEEPPKEFKV). Acidic residues predominate over residues 152–165 (EEEEEEQQPDSDDD). Position 162 is a phosphoserine (serine 162). Basic and acidic residues-rich tracts occupy residues 179–192 (VETFQQKEKRKRDI) and 200–214 (NFVEEEKRILRQCLD).

The protein belongs to the UPF0690 family.

The polypeptide is UPF0690 protein C1orf52 homolog (Danio rerio (Zebrafish)).